Here is a 380-residue protein sequence, read N- to C-terminus: mRNA cap guanine-N(7) methyltransferase (380 aa).

Residues 24–333 (SRIFFMRNMN…MYLVFGFRKK (310 aa)) form the mRNA cap 0 methyltransferase domain. 33–34 (NN) is a binding site for mRNA. Residues Lys37, Ala62, Asp84, Asp117, Gln139, and Tyr144 each contribute to the S-adenosyl-L-methionine site. Residues 336–380 (EAEKTEEEPATTKPVAESESEQKEVTESEEKEDQEDCEHQEAQTN) are disordered.

The protein belongs to the class I-like SAM-binding methyltransferase superfamily. mRNA cap 0 methyltransferase family.

It is found in the nucleus. It carries out the reaction a 5'-end (5'-triphosphoguanosine)-ribonucleoside in mRNA + S-adenosyl-L-methionine = a 5'-end (N(7)-methyl 5'-triphosphoguanosine)-ribonucleoside in mRNA + S-adenosyl-L-homocysteine. Functionally, mRNA-capping methyltransferase that methylates the N7 position of the added guanosine to the 5'-cap structure of mRNAs. Binds RNA containing 5'-terminal GpppC. The chain is mRNA cap guanine-N(7) methyltransferase (tag-72) from Caenorhabditis elegans.